A 557-amino-acid chain; its full sequence is Dihydroxy-acid dehydratase (557 aa).

Position 50 (Cys-50) interacts with [2Fe-2S] cluster. Asp-82 is a binding site for Mg(2+). Cys-123 is a binding site for [2Fe-2S] cluster. Asp-124 and Lys-125 together coordinate Mg(2+). An N6-carboxylysine modification is found at Lys-125. Cys-195 lines the [2Fe-2S] cluster pocket. Residue Glu-447 participates in Mg(2+) binding. Ser-473 (proton acceptor) is an active-site residue.

Belongs to the IlvD/Edd family. In terms of assembly, homodimer. [2Fe-2S] cluster is required as a cofactor. It depends on Mg(2+) as a cofactor.

The catalysed reaction is (2R)-2,3-dihydroxy-3-methylbutanoate = 3-methyl-2-oxobutanoate + H2O. It catalyses the reaction (2R,3R)-2,3-dihydroxy-3-methylpentanoate = (S)-3-methyl-2-oxopentanoate + H2O. It participates in amino-acid biosynthesis; L-isoleucine biosynthesis; L-isoleucine from 2-oxobutanoate: step 3/4. Its pathway is amino-acid biosynthesis; L-valine biosynthesis; L-valine from pyruvate: step 3/4. Functionally, functions in the biosynthesis of branched-chain amino acids. Catalyzes the dehydration of (2R,3R)-2,3-dihydroxy-3-methylpentanoate (2,3-dihydroxy-3-methylvalerate) into 2-oxo-3-methylpentanoate (2-oxo-3-methylvalerate) and of (2R)-2,3-dihydroxy-3-methylbutanoate (2,3-dihydroxyisovalerate) into 2-oxo-3-methylbutanoate (2-oxoisovalerate), the penultimate precursor to L-isoleucine and L-valine, respectively. The sequence is that of Dihydroxy-acid dehydratase from Ralstonia nicotianae (strain ATCC BAA-1114 / GMI1000) (Ralstonia solanacearum).